Consider the following 429-residue polypeptide: Ribosomal RNA small subunit methyltransferase B (429 aa).

Residues cysteine 254–lysine 260, aspartate 277, aspartate 303, and aspartate 322 each bind S-adenosyl-L-methionine. Cysteine 375 (nucleophile) is an active-site residue.

Belongs to the class I-like SAM-binding methyltransferase superfamily. RsmB/NOP family.

It localises to the cytoplasm. It carries out the reaction cytidine(967) in 16S rRNA + S-adenosyl-L-methionine = 5-methylcytidine(967) in 16S rRNA + S-adenosyl-L-homocysteine + H(+). In terms of biological role, specifically methylates the cytosine at position 967 (m5C967) of 16S rRNA. In Serratia proteamaculans (strain 568), this protein is Ribosomal RNA small subunit methyltransferase B.